We begin with the raw amino-acid sequence, 1756 residues long: Protein TIC 214 (1756 aa).

6 consecutive transmembrane segments (helical) span residues 18–38 (VSGP…LPFG), 54–74 (GYGI…FLSM), 79–99 (IYAA…YMFF), 128–148 (LFMD…NPVL), 163–183 (ISFM…LTIF), and 210–230 (FSLL…LPFL). Residues 1469–1504 (KNKQVEDGQDKNGQVEDQDGQDQDGQVEDQQTDGKK) are disordered. A compositionally biased stretch (basic and acidic residues) spans 1471 to 1482 (KQVEDGQDKNGQ). Residues 1484-1499 (EDQDGQDQDGQVEDQQ) are compositionally biased toward acidic residues.

The protein belongs to the TIC214 family. As to quaternary structure, part of the Tic complex.

It localises to the plastid. The protein resides in the chloroplast inner membrane. Its function is as follows. Involved in protein precursor import into chloroplasts. May be part of an intermediate translocation complex acting as a protein-conducting channel at the inner envelope. This chain is Protein TIC 214, found in Pinus thunbergii (Japanese black pine).